The following is a 193-amino-acid chain: Histone H5 (193 aa).

Residues 1 to 11 (TDSPIPAPAPA) show a composition bias toward pro residues. Disordered stretches follow at residues 1–29 (TDSP…HPTY) and 80–193 (GVLK…PKKK). Over residues 13–24 (KPKRARAPRKPA) the composition is skewed to basic residues. In terms of domain architecture, H15 spans 25-98 (SHPTYSEMIA…GASGSFRLAK (74 aa)). The segment covering 104 to 193 (RSPAGRKKKK…SGARKSPKKK (90 aa)) has biased composition (basic residues).

Belongs to the histone H1/H5 family. Erythroid cells.

The protein localises to the nucleus. It localises to the chromosome. In terms of biological role, histone H5 performs the same function as H1, being necessary for the condensation of nucleosome chains into higher order structures, and replaces histone H1 in certain cells. This chain is Histone H5, found in Anser anser anser (Western greylag goose).